The primary structure comprises 396 residues: 1-deoxy-D-xylulose 5-phosphate reductoisomerase (396 aa).

Residues Thr-13, Gly-14, Ser-15, Ile-16, and Asn-127 each contribute to the NADPH site. Lys-128 contributes to the 1-deoxy-D-xylulose 5-phosphate binding site. Residue Glu-129 participates in NADPH binding. Residue Asp-153 coordinates Mn(2+). Residues Ser-154, Glu-155, Ser-184, and His-207 each contribute to the 1-deoxy-D-xylulose 5-phosphate site. Glu-155 is a binding site for Mn(2+). Gly-213 contributes to the NADPH binding site. 4 residues coordinate 1-deoxy-D-xylulose 5-phosphate: Ser-220, Asn-225, Lys-226, and Glu-229. Glu-229 lines the Mn(2+) pocket.

It belongs to the DXR family. Mg(2+) is required as a cofactor. Requires Mn(2+) as cofactor.

It catalyses the reaction 2-C-methyl-D-erythritol 4-phosphate + NADP(+) = 1-deoxy-D-xylulose 5-phosphate + NADPH + H(+). It participates in isoprenoid biosynthesis; isopentenyl diphosphate biosynthesis via DXP pathway; isopentenyl diphosphate from 1-deoxy-D-xylulose 5-phosphate: step 1/6. Its function is as follows. Catalyzes the NADPH-dependent rearrangement and reduction of 1-deoxy-D-xylulose-5-phosphate (DXP) to 2-C-methyl-D-erythritol 4-phosphate (MEP). This Pseudomonas savastanoi pv. phaseolicola (strain 1448A / Race 6) (Pseudomonas syringae pv. phaseolicola (strain 1448A / Race 6)) protein is 1-deoxy-D-xylulose 5-phosphate reductoisomerase.